We begin with the raw amino-acid sequence, 197 residues long: Imidazoleglycerol-phosphate dehydratase (197 aa).

The protein belongs to the imidazoleglycerol-phosphate dehydratase family.

Its subcellular location is the cytoplasm. The enzyme catalyses D-erythro-1-(imidazol-4-yl)glycerol 3-phosphate = 3-(imidazol-4-yl)-2-oxopropyl phosphate + H2O. It participates in amino-acid biosynthesis; L-histidine biosynthesis; L-histidine from 5-phospho-alpha-D-ribose 1-diphosphate: step 6/9. This chain is Imidazoleglycerol-phosphate dehydratase, found in Laribacter hongkongensis (strain HLHK9).